A 213-amino-acid chain; its full sequence is 3-demethoxyubiquinol 3-hydroxylase (213 aa).

Residues E62, E92, H95, E144, E176, and H179 each coordinate Fe cation.

Belongs to the COQ7 family. It depends on Fe cation as a cofactor.

The protein localises to the cell membrane. It carries out the reaction a 5-methoxy-2-methyl-3-(all-trans-polyprenyl)benzene-1,4-diol + AH2 + O2 = a 3-demethylubiquinol + A + H2O. Its pathway is cofactor biosynthesis; ubiquinone biosynthesis. Catalyzes the hydroxylation of 2-nonaprenyl-3-methyl-6-methoxy-1,4-benzoquinol during ubiquinone biosynthesis. The protein is 3-demethoxyubiquinol 3-hydroxylase of Legionella pneumophila (strain Paris).